Consider the following 463-residue polypeptide: L-seryl-tRNA(Sec) selenium transferase (463 aa).

N6-(pyridoxal phosphate)lysine is present on lysine 295.

The protein belongs to the SelA family. In terms of assembly, homodecamer; pentamer of dimers. Binds only one seryl-tRNA(Sec) per dimer. Requires pyridoxal 5'-phosphate as cofactor.

It localises to the cytoplasm. The enzyme catalyses L-seryl-tRNA(Sec) + selenophosphate + H(+) = L-selenocysteinyl-tRNA(Sec) + phosphate. Its pathway is aminoacyl-tRNA biosynthesis; selenocysteinyl-tRNA(Sec) biosynthesis; selenocysteinyl-tRNA(Sec) from L-seryl-tRNA(Sec) (bacterial route): step 1/1. Converts seryl-tRNA(Sec) to selenocysteinyl-tRNA(Sec) required for selenoprotein biosynthesis. The polypeptide is L-seryl-tRNA(Sec) selenium transferase (Escherichia coli O17:K52:H18 (strain UMN026 / ExPEC)).